Here is a 133-residue protein sequence, read N- to C-terminus: C-C motif chemokine 21a (133 aa).

Residues 1 to 23 (MAQMMTLSLLSLVLALCIPWTQG) form the signal peptide. 3 disulfides stabilise this stretch: cysteine 31/cysteine 57, cysteine 32/cysteine 75, and cysteine 103/cysteine 122. A disordered region spans residues 86-133 (LMRRLDQPPAPGKQSPGCRKNRGTSKSGKKGKGSKGCKRTEQTQPSRG). The segment at 98–133 (KQSPGCRKNRGTSKSGKKGKGSKGCKRTEQTQPSRG) is C-terminal basic extension. Residues 104–122 (RKNRGTSKSGKKGKGSKGC) show a composition bias toward basic residues.

This sequence belongs to the intercrine beta (chemokine CC) family. In terms of assembly, binds to CCR7 and to CXCR3. Interacts with PDPN; relocalizes PDPN to the basolateral membrane. Interacts with GPR174. As to expression, expressed strongly in lung, spleen, thymus, peripheral and mesentric lymph nodes. Also expressed in the testis, kidney, liver, and heart.

Its subcellular location is the secreted. Inhibits hemopoiesis and stimulates chemotaxis. Chemotactic in vitro for thymocytes and activated T-cells, but not for B-cells, macrophages, or neutrophils. Potent mesangial cell chemoattractant. Shows preferential activity towards naive T-cells. May play a role in mediating homing of lymphocytes to secondary lymphoid organs. The chain is C-C motif chemokine 21a (Ccl21a) from Mus musculus (Mouse).